The sequence spans 975 residues: Ionotropic receptor 21a (975 aa).

An N-terminal signal peptide occupies residues 1–21 (MFKRIVLAVINLVFLIVSTTA). Asn67, Asn177, and Asn355 each carry an N-linked (GlcNAc...) asparagine glycan. Residues 433 to 453 (WPVWVAVILIYLLAIFPLAFS) form a helical membrane-spanning segment. N-linked (GlcNAc...) asparagine glycosylation occurs at Asn464. Residues 505-525 (IYWVFTIIITACYTGSIIAFI) traverse the membrane as a helical segment. N-linked (GlcNAc...) asparagine glycans are attached at residues Asn561, Asn586, and Asn611. A helical transmembrane segment spans residues 708 to 728 (MFLLMLFGYVVALGVLISEWV). Disordered stretches follow at residues 757-839 (ATAG…HSLS) and 911-938 (SPHS…RKEM). Polar residues-rich tracts occupy residues 760-777 (GSDN…TNRN) and 788-800 (VENS…NGSA). 2 N-linked (GlcNAc...) asparagine glycosylation sites follow: Asn763 and Asn797.

It belongs to the glutamate-gated ion channel (TC 1.A.10.1) family. In terms of tissue distribution, in both female and male antenna, expressed specifically in 3 sensory neurons of flagellomere 13 segment (at protein level).

The protein resides in the cell projection. The protein localises to the cilium membrane. Functionally, integral part of a neural sensory system in the antenna that provides the neural basis for the response to environmental changes in temperature (thermosensation). Specifically, required for thermosensing by the cooling cell. Plays a role in heat seeking and heat-stimulated blood feeding behavior. In Anopheles gambiae (African malaria mosquito), this protein is Ionotropic receptor 21a.